A 542-amino-acid polypeptide reads, in one-letter code: Nif-specific regulatory protein (542 aa).

Residues 29-170 (DLSKTLREVL…MVANLIGQTV (142 aa)) form the GAF domain. A Sigma-54 factor interaction domain is found at 203 to 432 (VIGISKAMQE…LENCVERTAT (230 aa)). Residues 231–238 (GESGTGKE) and 294–303 (AHGGTLFLDE) contribute to the ATP site. The interval 433 to 499 (MMRGDLITEV…ATGAAPPTSE (67 aa)) is inter-domain linker. A divalent metal cation-binding residues include Cys446 and Cys451. The interval 500-542 (RERLIWAMEQCGWVQAKAARALNISPRQMGYALQKFNIEVKKF) is C-terminal DNA-binding domain. Positions 514 to 533 (QAKAARALNISPRQMGYALQ) form a DNA-binding region, H-T-H motif.

As to quaternary structure, interacts with sigma-54.

Required for activation of most nif operons, which are directly involved in nitrogen fixation. In Herbaspirillum seropedicae, this protein is Nif-specific regulatory protein (nifA).